Reading from the N-terminus, the 618-residue chain is DELLA protein SLN1 (618 aa).

A disordered region spans residues Met-1–Glu-36. Residues Asp-7–Glu-17 are compositionally biased toward gly residues. The DELLA motif motif lies at Asp-39–Ala-43. 2 disordered regions span residues Leu-106 to Leu-137 and Ala-159 to Arg-197. The span at Ala-108–Pro-118 shows a compositional bias: pro residues. Composition is skewed to low complexity over residues Gln-119–Val-128 and Thr-176–Arg-197. The 394-residue stretch at Val-221 to Arg-614 folds into the GRAS domain. Residues Ile-228–Arg-284 are leucine repeat I (LRI). Residues Leu-235 to Glu-239 carry the LxCxE motif motif. The VHIID stretch occupies residues His-303 to Gly-368. The VHIID signature appears at Val-334–Asp-338. The segment at Gln-382–Glu-421 is leucine repeat II (LRII). Residues Ile-431–Asn-535 form a PFYRE region. Residues Ala-538 to Arg-614 are SAW.

It belongs to the GRAS family. DELLA subfamily. Post-translationally, phosphorylated. In terms of processing, ubiquitinated. Upon GA application it is ubiquitinated, leading to its subsequent degradation. In terms of tissue distribution, apparently restricted to regions where growth is occurring in the leaf blade. Localizes almost exclusively to the basal elongation zone (EZ) for the elongating blades of L1, L2 and L3. More detailed fractionation of the L3 blade shows that in cv. Himalaya, it is preferentially localized to the basal third of the EZ, but its presence can still be detected toward the end of the EZ (at protein level).

The protein resides in the nucleus. Functionally, probable transcriptional regulator that acts as a repressor of the gibberellin (GA) signaling pathway. Probably acts by participating in large multiprotein complexes that repress transcription of GA-inducible genes. Upon GA application, it is degraded by the proteasome, allowing the GA signaling pathway. Acts as a negative regulator of GAMYB gene expression. This Hordeum vulgare (Barley) protein is DELLA protein SLN1 (SLN1).